The following is a 71-amino-acid chain: MARITIEDCLKRIPNRFQLTLAATYRARQITIGSTPQVELEKSDKDKPTVIALREIAAGKVGLEVLNRGQA.

The protein belongs to the RNA polymerase subunit omega family. The RNAP catalytic core consists of 2 alpha, 1 beta, 1 beta' and 1 omega subunit. When a sigma factor is associated with the core the holoenzyme is formed, which can initiate transcription.

The enzyme catalyses RNA(n) + a ribonucleoside 5'-triphosphate = RNA(n+1) + diphosphate. Promotes RNA polymerase assembly. Latches the N- and C-terminal regions of the beta' subunit thereby facilitating its interaction with the beta and alpha subunits. The protein is DNA-directed RNA polymerase subunit omega of Aromatoleum aromaticum (strain DSM 19018 / LMG 30748 / EbN1) (Azoarcus sp. (strain EbN1)).